The following is a 92-amino-acid chain: C-C motif chemokine 3 (92 aa).

The N-terminal stretch at 1–23 is a signal peptide; it reads MQVSTAALAVLLCTMALCNQFSA. 2 disulfides stabilise this stretch: Cys-33-Cys-57 and Cys-34-Cys-73.

This sequence belongs to the intercrine beta (chemokine CC) family. Self-associates. Also heterodimer of MIP-1-alpha(4-69) and MIP-1-beta(3-69). Interacts with CCR1. Post-translationally, N-terminal processed form LD78-alpha(4-69) is produced by proteolytic cleavage after secretion from HTLV1-transformed T-cells.

The protein resides in the secreted. Its function is as follows. Monokine with inflammatory and chemokinetic properties. Binds to CCR1, CCR4 and CCR5. One of the major HIV-suppressive factors produced by CD8+ T-cells. Recombinant MIP-1-alpha induces a dose-dependent inhibition of different strains of HIV-1, HIV-2, and simian immunodeficiency virus (SIV). This chain is C-C motif chemokine 3 (CCL3), found in Homo sapiens (Human).